The chain runs to 183 residues: Endoribonuclease AbiQ (183 aa).

Belongs to the ToxN/AbiQ toxin family. As to quaternary structure, forms a triangular heterohexamer with a single 35-nt-long repeat of RNA antitoxin AntiQ.

Its subcellular location is the cytoplasm. Functionally, toxic component of a type III toxin-antitoxin (TA) system. An endoribonuclease that is probably sequence-specific. It is neutralized by its cognate antitoxin RNA AntiQ, which has 2.8 35 nucleotide-long repeats. Cannot be cloned in L.lactis subsp. cremoris strain NZ9000 in the absence of the antitoxin gene; expression in strain NZ9000 even in the presence of antiQ inhibits growth in a bacteriostatic fashion. Confers resistance to 936 and c2 phages but not P335 phages in L.lactis, causes an abortive infection (Abi phenotype). Viral DNA is replicated but not cleaved from its concatemeric form, while the viral major structural protein is produced normally in the presence of this protein. Operon expression in E.coli confers resistance to 3 phages of the Myoviridae family (T4, RB69 and phage 2) and 1 of the Siphoviridae family (T5), but not other tested phages (T1, T3, lambda vir, HK97, Mu and pilH alpha). The presence of this operon in L.lactis subsp. lactis strain IL1403 during phage P008 infection alters the viral transcription profiles. In Lactococcus lactis subsp. lactis (Streptococcus lactis), this protein is Endoribonuclease AbiQ.